A 56-amino-acid chain; its full sequence is Large ribosomal subunit protein bL33 (56 aa).

It belongs to the bacterial ribosomal protein bL33 family.

In Acidovorax sp. (strain JS42), this protein is Large ribosomal subunit protein bL33.